The sequence spans 101 residues: Small ribosomal subunit protein uS14 (101 aa).

The protein belongs to the universal ribosomal protein uS14 family. Part of the 30S ribosomal subunit. Contacts proteins S3 and S10.

Binds 16S rRNA, required for the assembly of 30S particles and may also be responsible for determining the conformation of the 16S rRNA at the A site. This is Small ribosomal subunit protein uS14 from Synechococcus sp. (strain JA-2-3B'a(2-13)) (Cyanobacteria bacterium Yellowstone B-Prime).